Consider the following 189-residue polypeptide: Small ribosomal subunit protein uS7 (189 aa).

Belongs to the universal ribosomal protein uS7 family. As to quaternary structure, component of the small ribosomal subunit.

It is found in the cytoplasm. The polypeptide is Small ribosomal subunit protein uS7 (RPS5) (Encephalitozoon cuniculi (strain GB-M1) (Microsporidian parasite)).